We begin with the raw amino-acid sequence, 312 residues long: Olfactory receptor 51A7 (312 aa).

At 1–25 (MSVLNNSEVKLFLLIGIPGLEHAHI) the chain is on the extracellular side. N5 carries N-linked (GlcNAc...) asparagine glycosylation. A helical transmembrane segment spans residues 26-46 (WFSIPICLMYLLAIMGNCTIL). The Cytoplasmic segment spans residues 47–54 (FIIKTEPS). Residues 55–75 (LHEPMYYFLAMLAVSDMGLSL) form a helical membrane-spanning segment. The Extracellular segment spans residues 76 to 99 (SSLPTMLRVFLFNAMGISPNACFA). C97 and C189 are joined by a disulfide. Residues 100-120 (QEFFIHGFTVMESSVLLIMSL) traverse the membrane as a helical segment. Residues 121–139 (DRFLAIHNPLRYSSILTSN) lie on the Cytoplasmic side of the membrane. The helical transmembrane segment at 140-160 (RVAKMGLILAIRSILLVIPFP) threads the bilayer. The Extracellular portion of the chain corresponds to 161-196 (FTLRRLKYCQKNLLSHSYCLHQDTMKLACSDNKTNV). N192 carries N-linked (GlcNAc...) asparagine glycosylation. The chain crosses the membrane as a helical span at residues 197–216 (IYGFFIALCTMLDLALIVLS). At 217–236 (YVLILKTILSIASLAERLKA) the chain is on the cytoplasmic side. The chain crosses the membrane as a helical span at residues 237–257 (LNTCVSHICAVLTFYVPIITL). Residues 258-272 (AAMHHFAKHKSPLVV) are Extracellular-facing. A helical transmembrane segment spans residues 273–293 (ILIADMFLLVPPLMNPIVYCV). Over 294 to 312 (KTRQIWEKILGKLLNVCGR) the chain is Cytoplasmic.

Belongs to the G-protein coupled receptor 1 family.

The protein resides in the cell membrane. Odorant receptor. This is Olfactory receptor 51A7 (OR51A7) from Homo sapiens (Human).